We begin with the raw amino-acid sequence, 199 residues long: Small ribosomal subunit protein uS4 (199 aa).

The 64-residue stretch at 91 to 154 (SRLDNLVYRM…RGLQLIKDAL (64 aa)) folds into the S4 RNA-binding domain.

This sequence belongs to the universal ribosomal protein uS4 family. In terms of assembly, part of the 30S ribosomal subunit. Contacts protein S5. The interaction surface between S4 and S5 is involved in control of translational fidelity.

Its function is as follows. One of the primary rRNA binding proteins, it binds directly to 16S rRNA where it nucleates assembly of the body of the 30S subunit. In terms of biological role, with S5 and S12 plays an important role in translational accuracy. This is Small ribosomal subunit protein uS4 from Brevibacillus brevis (strain 47 / JCM 6285 / NBRC 100599).